Here is a 303-residue protein sequence, read N- to C-terminus: Glycine--tRNA ligase alpha subunit (303 aa).

It belongs to the class-II aminoacyl-tRNA synthetase family. In terms of assembly, tetramer of two alpha and two beta subunits.

Its subcellular location is the cytoplasm. It carries out the reaction tRNA(Gly) + glycine + ATP = glycyl-tRNA(Gly) + AMP + diphosphate. This is Glycine--tRNA ligase alpha subunit from Streptococcus equi subsp. equi (strain 4047).